The primary structure comprises 1053 residues: Putative ABC transporter C family member 15 (1053 aa).

An ABC transmembrane type-1 1 domain is found at 1–180 (MSVDVQRITD…LPDLLSALVQ (180 aa)). 4 helical membrane-spanning segments follow: residues 11–31 (FIWY…AIYI), 36–56 (LGLG…CNYP), 125–145 (FILW…CMLM), and 151–171 (AGAV…IFGL). The 224-residue stretch at 214 to 437 (VEIENGAFSW…NIGFEVLTQC (224 aa)) folds into the ABC transporter 1 domain. Residue 249-256 (GAVGSGKS) participates in ATP binding. 5 consecutive transmembrane segments (helical) span residues 481-503 (LLVP…SNYW), 523-543 (ILLV…ARTI), 595-615 (MAVK…TIFV), 714-734 (LSHF…EGVI), and 738-758 (IAGL…TVIW). One can recognise an ABC transmembrane type-1 2 domain in the interval 483–765 (VPFIILAQSC…VIWNICNAEN (283 aa)). The ABC transporter 2 domain maps to 804-1036 (FRDLQVRYAE…EDSFFSKLIK (233 aa)). Residue 836–843 (GRTGSGKS) participates in ATP binding.

The protein belongs to the ABC transporter superfamily. ABCC family. Conjugate transporter (TC 3.A.1.208) subfamily.

Its subcellular location is the membrane. It catalyses the reaction ATP + H2O + xenobioticSide 1 = ADP + phosphate + xenobioticSide 2.. Pump for glutathione S-conjugates. The protein is Putative ABC transporter C family member 15 (ABCC15) of Arabidopsis thaliana (Mouse-ear cress).